The sequence spans 165 residues: Zinc finger C2H2 protein ECU11_0990 (165 aa).

Composition is skewed to basic and acidic residues over residues 1-10 and 19-32; these read MEAESPKERV and DPER…DTSS. The disordered stretch occupies residues 1–38; that stretch reads MEAESPKERVQGVSGESWDPERGVKEREDTSSKKGKGV. 2 consecutive C2H2-type zinc fingers follow at residues 103-125 and 136-158; these read FGCE…KAQH and LFCP…SRYH.

The chain is Zinc finger C2H2 protein ECU11_0990 from Encephalitozoon cuniculi (strain GB-M1) (Microsporidian parasite).